The sequence spans 318 residues: 1-aminocyclopropane-1-carboxylate oxidase (318 aa).

The region spanning 153–253 (PNFGTKVANY…RMSIASFYNP (101 aa)) is the Fe2OG dioxygenase domain. The Fe cation site is built by His-177, Asp-179, and His-234.

Belongs to the iron/ascorbate-dependent oxidoreductase family. Fe cation is required as a cofactor.

It catalyses the reaction 1-aminocyclopropane-1-carboxylate + L-ascorbate + O2 = ethene + L-dehydroascorbate + hydrogen cyanide + CO2 + 2 H2O. It participates in alkene biosynthesis; ethylene biosynthesis via S-adenosyl-L-methionine; ethylene from S-adenosyl-L-methionine: step 2/2. This Diospyros kaki (Kaki persimmon) protein is 1-aminocyclopropane-1-carboxylate oxidase (DK-ACO1).